A 261-amino-acid chain; its full sequence is uncharacterized protein (261 aa).

The span at 20-34 (TMSTPFLESDNSNTQ) shows a compositional bias: polar residues. The interval 20 to 55 (TMSTPFLESDNSNTQSISGRIGSNNNSNSKNSGGIG) is disordered. A compositionally biased stretch (low complexity) spans 35 to 51 (SISGRIGSNNNSNSKNS). Transmembrane regions (helical) follow at residues 113-133 (LFSG…ILLL), 183-200 (LIFW…ILFF), and 204-226 (IISL…MANV).

The protein belongs to the TVP23 family.

It is found in the membrane. This is an uncharacterized protein from Dictyostelium discoideum (Social amoeba).